Consider the following 142-residue polypeptide: Hemoglobin subunit alpha-4 (142 aa).

In terms of domain architecture, Globin spans 2–142 (VLSAADKSNV…VSTVLTSKYR (141 aa)). His-59 provides a ligand contact to O2. His-88 is a heme b binding site.

It belongs to the globin family. Heterotetramer of two alpha chains and two beta chains. In terms of tissue distribution, red blood cells.

In terms of biological role, involved in oxygen transport from the lung to the various peripheral tissues. The sequence is that of Hemoglobin subunit alpha-4 from Bubalus bubalis (Domestic water buffalo).